A 354-amino-acid chain; its full sequence is Uroporphyrinogen decarboxylase (354 aa).

Residues 25-29 (RQAGR), D75, Y152, T207, and H330 each bind substrate.

The protein belongs to the uroporphyrinogen decarboxylase family. As to quaternary structure, homodimer.

The protein localises to the cytoplasm. The catalysed reaction is uroporphyrinogen III + 4 H(+) = coproporphyrinogen III + 4 CO2. The protein operates within porphyrin-containing compound metabolism; protoporphyrin-IX biosynthesis; coproporphyrinogen-III from 5-aminolevulinate: step 4/4. Catalyzes the decarboxylation of four acetate groups of uroporphyrinogen-III to yield coproporphyrinogen-III. The polypeptide is Uroporphyrinogen decarboxylase (Xanthomonas oryzae pv. oryzae (strain PXO99A)).